Consider the following 84-residue polypeptide: Small ribosomal subunit protein bS16 (84 aa).

The protein belongs to the bacterial ribosomal protein bS16 family.

This chain is Small ribosomal subunit protein bS16, found in Dichelobacter nodosus (strain VCS1703A).